A 579-amino-acid polypeptide reads, in one-letter code: Arginine--tRNA ligase (579 aa).

Positions 123 to 133 (ANPTGPVHVGR) match the 'HIGH' region motif.

The protein belongs to the class-I aminoacyl-tRNA synthetase family.

It is found in the cytoplasm. It catalyses the reaction tRNA(Arg) + L-arginine + ATP = L-arginyl-tRNA(Arg) + AMP + diphosphate. The chain is Arginine--tRNA ligase from Haloarcula marismortui (strain ATCC 43049 / DSM 3752 / JCM 8966 / VKM B-1809) (Halobacterium marismortui).